The sequence spans 607 residues: UvrABC system protein C (607 aa).

In terms of domain architecture, GIY-YIG spans 16 to 94 (GRPGVYRMFD…IKEWRPPYNI (79 aa)). The region spanning 203 to 238 (NALSDELNASMEKAAMALDFERAAELRDQVALLRRV) is the UVR domain.

The protein belongs to the UvrC family. In terms of assembly, interacts with UvrB in an incision complex.

The protein resides in the cytoplasm. Its function is as follows. The UvrABC repair system catalyzes the recognition and processing of DNA lesions. UvrC both incises the 5' and 3' sides of the lesion. The N-terminal half is responsible for the 3' incision and the C-terminal half is responsible for the 5' incision. This chain is UvrABC system protein C, found in Pseudomonas syringae pv. tomato (strain ATCC BAA-871 / DC3000).